Here is a 483-residue protein sequence, read N- to C-terminus: Macrophage receptor MARCO (483 aa).

Topologically, residues 1–48 are cytoplasmic; it reads MGNKKALKEEAFLGSAEEGADFDQAMFPVMETFEINDPMPKKRNWGSF. A helical; Signal-anchor for type II membrane protein transmembrane segment spans residues 49–69; the sequence is CTAVMAIHLILLTAGTTLLTL. The Extracellular segment spans residues 70-483; the sequence is KVLSLQKWIL…HNEDAGVECR (414 aa). N-linked (GlcNAc...) asparagine glycosylation is found at Asn-85 and Asn-137. Residues 146–386 form a disordered region; sequence RIKGERGSPG…GEKGEKGQSF (241 aa). The region spanning 148-383 is the Collagen-like domain; it reads KGERGSPGIP…GQKGEKGEKG (236 aa). Residues 153-166 are compositionally biased toward low complexity; sequence SPGIPGLQGPPGIK. Over residues 193–216 the composition is skewed to basic and acidic residues; the sequence is KGSKGDKGLIGPKGEHGTKGDKGD. Residues 273–286 show a composition bias toward low complexity; the sequence is VPGTPGAAGPSGAK. Basic and acidic residues predominate over residues 376–386; it reads KGEKGEKGQSF. Residues 389-483 form the SRCR domain; sequence VRIVGGTNRG…HNEDAGVECR (95 aa). 3 disulfides stabilise this stretch: Cys-412-Cys-472, Cys-425-Cys-482, and Cys-452-Cys-462.

Homotrimer; disulfide-linked. Trimers may assemble in larger oligomers thus resulting in the creation of a large surface capable of interacting with very large ligands. In terms of processing, N-glycosylated. As to expression, expressed in alveolar macrophages, macrophages of lymph node sinues, and Kupffer cells in liver (at protein level).

Its subcellular location is the cell membrane. Pattern recognition receptor (PRR) which binds Gram-positive and Gram-negative bacteria. Also plays a role in binding of unopsonized particles by alveolar macrophages. Binds to the secretoglobin SCGB3A2. This chain is Macrophage receptor MARCO (MARCO), found in Mesocricetus auratus (Golden hamster).